The primary structure comprises 618 residues: Nuclear RNA export factor 1 (618 aa).

Residues 1 to 15 (MADEGKSYNEHDDRV) are compositionally biased toward basic and acidic residues. A disordered region spans residues 1–113 (MADEGKSYNE…RGGAGTSQDG (113 aa)). At Ala2 the chain carries N-acetylalanine. The interval 2 to 59 (ADEGKSYNEHDDRVSFPQRRKKGRGPFRWKCGEGNRRSGRGGSGVQSSRFEEDDGDVA) is minor non-specific RNA-binding. Residues 2-117 (ADEGKSYNEH…GTSQDGTTKN (116 aa)) are RNA-binding (RBD). The tract at residues 2–197 (ADEGKSYNEH…IIINASAPPY (196 aa)) is interaction with ALYREF/THOC4 and LUZP4. Residues 19-28 (QRRKKGRGPF) are compositionally biased toward basic residues. At Arg41 the chain carries Asymmetric dimethylarginine; alternate. Position 41 is an omega-N-methylarginine; alternate (Arg41). The segment at 60-117 (MNDPQDGPRVRYNPYTNRPNRRGDGWHDRDRIHITVRRDRAPAERGGAGTSQDGTTKN) is major non-specific RNA-binding. An RNA binding region spans residues 60 to 117 (MNDPQDGPRVRYNPYTNRPNRRGDGWHDRDRIHITVRRDRAPAERGGAGTSQDGTTKN). The Nuclear localization signal motif lies at 66–99 (GPRVRYNPYTNRPNRRGDGWHDRDRIHITVRRDR). Positions 80 to 102 (RRGDGWHDRDRIHITVRRDRAPA) are enriched in basic and acidic residues. Positions 82 to 109 (GDGWHDRDRIHITVRRDRAPAERGGAGT) match the Nuclear export signal motif. In terms of domain architecture, RRM spans 118 to 197 (WFKITIPYGR…IIINASAPPY (80 aa)). A 3'-nitrotyrosine modification is found at Tyr125. 4 LRR repeats span residues 265–290 (ELLS…QKAP), 291–314 (NLKT…IKGL), 315–342 (KLEE…AIRE), and 343–370 (RFPK…TMLP). The NTF2 domain occupies 385–535 (LVLRFLQQYY…LCIVNDELFV (151 aa)). The 55-residue stretch at 564 to 618 (PEQQEMLQAFSTQSGMNLEWSQKCLQDNNWDYTRSAQAFTLLKAKGEIPEVAFMK) folds into the TAP-C domain.

The protein belongs to the NXF family. As to quaternary structure, heterodimer (via NTF2 domain) with NXT1. The formation of NXF1-NXT1 heterodimers is required for the NXF1-mediated nuclear mRNA export. Forms a complex with RANBP2/NUP358, NXT1 and RANGAP1. Associates with the exon junction complex (EJC). Associates with the transcription/export (TREX) complex. Found in a mRNA complex with UPF3A and UPF3B. Found in a post-splicing complex with RBM8A, UPF1, UPF2, UPF3A, UPF3B and RNPS1. Interacts (via N-terminus) with DHX9 (via N-terminus); this interaction is direct and negatively regulates NXF1-mediated nuclear export of constitutive transport element (CTE)-containing cellular mRNAs. Interacts with FYTTD1/UIF. Interacts with EIF4A3. Interacts with NUP42. Interacts with ALYREF/THOC4. Interacts with CHTOP. Interacts with FRG1 (via N-terminus). Interacts with LUZP4. Interacts with FMR1; the interaction occurs in a mRNA-dependent and polyribosomes-independent manner in the nucleus. Interacts with CPSF6 (via N-terminus); this interaction is direct. Interacts with RBM15. Interacts with RBM15B. Interacts with MCM3AP; this interaction is not mediated by RNA. Interacts with DDX3X (via C-terminus); this interaction may be partly involved in DDX3X nuclear export and in NXF1 localization to stress granules. Interacts with PABPC1/PABP1. As to expression, expressed ubiquitously.

Its subcellular location is the nucleus. The protein resides in the nucleoplasm. It is found in the nucleus speckle. It localises to the cytoplasm. The protein localises to the nuclear pore complex. Its subcellular location is the nucleus envelope. The protein resides in the stress granule. Involved in the nuclear export of mRNA species bearing retroviral constitutive transport elements (CTE) and in the export of mRNA from the nucleus to the cytoplasm (TAP/NFX1 pathway). The NXF1-NXT1 heterodimer is involved in the export of HSP70 mRNA in conjunction with ALYREF/THOC4 and THOC5 components of the TREX complex. ALYREF/THOC4-bound mRNA is thought to be transferred to the NXF1-NXT1 heterodimer for export. Also involved in nuclear export of m6A-containing mRNAs: interaction between SRSF3 and YTHDC1 facilitates m6A-containing mRNA-binding to both SRSF3 and NXF1, promoting mRNA nuclear export. The protein is Nuclear RNA export factor 1 (Nxf1) of Mus musculus (Mouse).